Consider the following 3127-residue polypeptide: Probable polyketide synthase 33 (3127 aa).

Residues 24–457 (SGDVAVVGIG…GSNVCLILSE (434 aa)) enclose the Ketosynthase family 3 (KS3) domain. Active-site for beta-ketoacyl synthase activity residues include Cys196, His335, and His380. Residues 660-693 (GVSADIIIGHSLGEISSAYCSGMIDFQTLCYLTY) are acyl/malonyl transferase. Ser670 functions as the For acyl/malonyl transferase activity in the catalytic mechanism. The tract at residues 958–1080 (GPSIHSLGNN…GNFSLFKHNI (123 aa)) is N-terminal hotdog fold. The 300-residue stretch at 958 to 1257 (GPSIHSLGNN…CTIVGSNPDS (300 aa)) folds into the PKS/mFAS DH domain. The active-site Proton acceptor; for dehydratase activity is the His992. The segment at 1096-1257 (NFTTISKQDF…CTIVGSNPDS (162 aa)) is C-terminal hotdog fold. Asp1168 (proton donor; for dehydratase activity) is an active-site residue. The disordered stretch occupies residues 1369 to 1394 (SNNNNNNNNNNNNNNNNNNNNKNNGY). The segment covering 1370 to 1394 (NNNNNNNNNNNNNNNNNNNNKNNGY) has biased composition (low complexity). A Carrier domain is found at 2539-2616 (SNNEIIRSTI…QSIEIIKSAH (78 aa)). Ser2576 carries the post-translational modification O-(pantetheine 4'-phosphoryl)serine. The interval 2617–2659 (NKNNNNNNINNNNNNNNNNNNNNNNNNNNNNNNNNNNNNNNNN) is disordered. Residues 2617 to 2671 (NKNNNNNNINNNNNNNNNNNNNNNNNNNNNNNNNNNNNNNNNNLVKKEQQSLDEF) are a coiled coil. The chain crosses the membrane as a helical span at residues 2937–2957 (VLTLYNIPITIFIAILIIDIF).

Pantetheine 4'-phosphate is required as a cofactor.

It localises to the membrane. Probable polyketide synthase. In Dictyostelium discoideum (Social amoeba), this protein is Probable polyketide synthase 33 (pks33).